The following is a 424-amino-acid chain: MLDIKKVRQNPEIVVEALKKRGANLNLDEFLRLDEERRKLLVDVEQKKYKRNTVSEEIGRLKKQGLPADDLILEMRALSDEIKKLDDEVAQIEEKLHAILLTIPNIPHESVPVGKDSSENVEVRRWGEPRKFTFTPKAHWEIGEELDILDFARGSKVTGARFTFYKGLGAMLERAVINFMLDLHTREHGYVEVFPPFIVNADSMMGTGQLPKFAEDMFKLEGLNYYLIPTAEVPVTNLYREEILDGDKLPIYHCAYSACFRAEAGAAGRDTRGLIRQHQFNKVELVKFVKPENSYEELEKLTRDAERVLQLLGLPYRVVVLCTGDLGFSAAKTYDIEVWLPSYNDYKEISSCSNFEDFQARRAKIRYKEHPKAKPEFVHTLNGSGLAVGRTVAAILENYQNEDGSVTVPEVLRPYMGVDRIYKK.

230–232 (TAE) contributes to the L-serine binding site. 261–263 (RAE) serves as a coordination point for ATP. Position 284 (E284) interacts with L-serine. Position 348–351 (348–351 (EISS)) interacts with ATP. S384 is a binding site for L-serine.

This sequence belongs to the class-II aminoacyl-tRNA synthetase family. Type-1 seryl-tRNA synthetase subfamily. In terms of assembly, homodimer. The tRNA molecule binds across the dimer.

It is found in the cytoplasm. It carries out the reaction tRNA(Ser) + L-serine + ATP = L-seryl-tRNA(Ser) + AMP + diphosphate + H(+). It catalyses the reaction tRNA(Sec) + L-serine + ATP = L-seryl-tRNA(Sec) + AMP + diphosphate + H(+). It participates in aminoacyl-tRNA biosynthesis; selenocysteinyl-tRNA(Sec) biosynthesis; L-seryl-tRNA(Sec) from L-serine and tRNA(Sec): step 1/1. Its function is as follows. Catalyzes the attachment of serine to tRNA(Ser). Is also able to aminoacylate tRNA(Sec) with serine, to form the misacylated tRNA L-seryl-tRNA(Sec), which will be further converted into selenocysteinyl-tRNA(Sec). The polypeptide is Serine--tRNA ligase (Carboxydothermus hydrogenoformans (strain ATCC BAA-161 / DSM 6008 / Z-2901)).